The chain runs to 365 residues: Glycine oxidase (365 aa).

Residues 12 to 13 (VI), 32 to 33 (DQ), 40 to 41 (SS), 45 to 47 (GGI), and I173 each bind FAD. R302 is a substrate binding site. 327-333 (HYRNGLV) lines the FAD pocket.

This sequence belongs to the DAO family. ThiO subfamily. As to quaternary structure, monomer. FAD is required as a cofactor.

The catalysed reaction is glycine + O2 + H2O = glyoxylate + H2O2 + NH4(+). It carries out the reaction sarcosine + O2 + H2O = methylamine + glyoxylate + H2O2. The protein operates within cofactor biosynthesis; thiamine diphosphate biosynthesis. In terms of biological role, catalyzes the oxidation of glycine, leading to glyoxyl imine and hydrogen peroxide as primary products; glyoxyl imine is used for the biosynthesis of the thiazole ring of thiamine. Otherwise, glyoxyl imine is spontaneously hydrolyzed in water to produce glyoxylate and ammonia. Can also use sarcosine (N-methylglycine) as substrate, and, to a lesser extent, N-ethylglycine and D-proline. Has no activity towards other amino-acids D-Asp, D-Glu, D-Gln, D-His, D-Leu, D-Lys, D-ornithine, D-Trp, D-Val, L-Ala, L-Asp, L-Glu, L-His, L-Leu, L-Lys, L-Met and L-Pro. In Pseudomonas putida (strain ATCC 47054 / DSM 6125 / CFBP 8728 / NCIMB 11950 / KT2440), this protein is Glycine oxidase.